A 521-amino-acid chain; its full sequence is MFS siderochrome iron transporter 1 (521 aa).

Over residues methionine 1–glutamine 10 the composition is skewed to polar residues. The tract at residues methionine 1–proline 29 is disordered. The segment covering aspartate 11–proline 29 has biased composition (basic and acidic residues). 5 helical membrane-spanning segments follow: residues tryptophan 62–glycine 82, phenylalanine 99–cysteine 119, tryptophan 126–glutamine 146, phenylalanine 148–valine 168, and isoleucine 187–isoleucine 207. An N-linked (GlcNAc...) asparagine glycan is attached at asparagine 209. Transmembrane regions (helical) follow at residues tyrosine 229–phenylalanine 249, leucine 330–leucine 350, valine 379–proline 399, lysine 404–alanine 424, leucine 431–isoleucine 451, and glycine 466–alanine 486. N-linked (GlcNAc...) asparagine glycosylation occurs at asparagine 487. Residues alanine 491 to leucine 511 form a helical membrane-spanning segment.

Belongs to the major facilitator superfamily.

Its subcellular location is the membrane. Functionally, major facilitator transporter probably involved in siderophore basidioferrin transmembrane transport. This Ceriporiopsis subvermispora (strain B) (White-rot fungus) protein is MFS siderochrome iron transporter 1.